Here is a 135-residue protein sequence, read N- to C-terminus: RxLR effector protein PITG_02860 (135 aa).

An N-terminal signal peptide occupies residues 1–18 (MRLAFLLLAVSHFICGNA). The RxLR-dEER motif lies at 48-64 (RKLLRTDERLSEANEER). The interval 126–135 (LKDPQAFRGP) is NRL1-binding domain.

This sequence belongs to the RxLR effector family. As to quaternary structure, interacts with host ubiquitin E3 ligase NRL1.

It is found in the secreted. It localises to the host cytoplasm. The protein resides in the host nucleus. Its subcellular location is the host nucleoplasm. Functionally, effector that promotes P.infestans virulence and suppresses pattern-triggered immunity (PTI). Interacts with the host ubiquitin E3 ligase NRL1 and enhances the association between NRL1 and SWAP70 to promote proteasome-mediated degradation of SWAP70, which results in the suppression of immunity. This chain is RxLR effector protein PITG_02860, found in Phytophthora infestans (strain T30-4) (Potato late blight agent).